The primary structure comprises 99 residues: Integration host factor subunit alpha (99 aa).

A disordered region spans residues 49-71 (FGNFDLRDKNQRPGRNPKTGEDI).

It belongs to the bacterial histone-like protein family. In terms of assembly, heterodimer of an alpha and a beta chain.

Its function is as follows. This protein is one of the two subunits of integration host factor, a specific DNA-binding protein that functions in genetic recombination as well as in transcriptional and translational control. In Shewanella denitrificans (strain OS217 / ATCC BAA-1090 / DSM 15013), this protein is Integration host factor subunit alpha.